The primary structure comprises 342 residues: RNA 3'-terminal phosphate cyclase (342 aa).

Residues Gln-103 and 283–287 (YLADQ) each bind ATP. His-308 (tele-AMP-histidine intermediate) is an active-site residue.

Belongs to the RNA 3'-terminal cyclase family. Type 1 subfamily.

The protein localises to the cytoplasm. The catalysed reaction is a 3'-end 3'-phospho-ribonucleotide-RNA + ATP = a 3'-end 2',3'-cyclophospho-ribonucleotide-RNA + AMP + diphosphate. In terms of biological role, catalyzes the conversion of 3'-phosphate to a 2',3'-cyclic phosphodiester at the end of RNA. The mechanism of action of the enzyme occurs in 3 steps: (A) adenylation of the enzyme by ATP; (B) transfer of adenylate to an RNA-N3'P to produce RNA-N3'PP5'A; (C) and attack of the adjacent 2'-hydroxyl on the 3'-phosphorus in the diester linkage to produce the cyclic end product. The biological role of this enzyme is unknown but it is likely to function in some aspects of cellular RNA processing. This Shigella dysenteriae serotype 1 (strain Sd197) protein is RNA 3'-terminal phosphate cyclase.